A 792-amino-acid chain; its full sequence is Phenylalanine--tRNA ligase beta subunit (792 aa).

The region spanning 39 to 147 (GESLGQVVVA…DDAPVGQALA (109 aa)) is the tRNA-binding domain. The 76-residue stretch at 400-475 (PQPVHIRLRR…RIHGYDRVPT (76 aa)) folds into the B5 domain. Mg(2+) is bound by residues Asp453, Asp459, Glu462, and Glu463. In terms of domain architecture, FDX-ACB spans 698–791 (SRFPSVRRDL…IEREHRARIR (94 aa)).

Belongs to the phenylalanyl-tRNA synthetase beta subunit family. Type 1 subfamily. As to quaternary structure, tetramer of two alpha and two beta subunits. Requires Mg(2+) as cofactor.

It is found in the cytoplasm. The enzyme catalyses tRNA(Phe) + L-phenylalanine + ATP = L-phenylalanyl-tRNA(Phe) + AMP + diphosphate + H(+). The polypeptide is Phenylalanine--tRNA ligase beta subunit (Xanthomonas axonopodis pv. citri (strain 306)).